An 887-amino-acid polypeptide reads, in one-letter code: Alanine--tRNA ligase (887 aa).

Residues H581, H585, C683, and H687 each contribute to the Zn(2+) site.

Belongs to the class-II aminoacyl-tRNA synthetase family. The cofactor is Zn(2+).

The protein resides in the cytoplasm. The enzyme catalyses tRNA(Ala) + L-alanine + ATP = L-alanyl-tRNA(Ala) + AMP + diphosphate. Catalyzes the attachment of alanine to tRNA(Ala) in a two-step reaction: alanine is first activated by ATP to form Ala-AMP and then transferred to the acceptor end of tRNA(Ala). Also edits incorrectly charged Ser-tRNA(Ala) and Gly-tRNA(Ala) via its editing domain. This Ehrlichia ruminantium (strain Welgevonden) protein is Alanine--tRNA ligase.